We begin with the raw amino-acid sequence, 73 residues long: Homeodomain-only protein (73 aa).

Residues 3–62 (AEPANGPTEDQVEILEYNFNKVNRHPDPTTLCLIAAEAGLSEEETQKWFKQRLAQWRRSE) constitute a DNA-binding region (homeobox; degenerate).

Interacts with serum response factor (SRF). Component of a large complex containing histone deacetylases such as HDAC2. Interacts with the acetylated forms of HSPA1A and HSPA1B. Interacts with HSPA8.

It localises to the nucleus. It is found in the cytoplasm. In terms of biological role, atypical homeodomain protein which does not bind DNA and is required to modulate cardiac growth and development. Acts via its interaction with SRF, thereby modulating the expression of SRF-dependent cardiac-specific genes and cardiac development. Prevents SRF-dependent transcription either by inhibiting SRF binding to DNA or by recruiting histone deacetylase (HDAC) proteins that prevent transcription by SRF. Overexpression causes cardiac hypertrophy. Acts as a co-chaperone for HSPA1A and HSPA1B chaperone proteins and assists in chaperone-mediated protein refolding. This Sus scrofa (Pig) protein is Homeodomain-only protein (HOPX).